Here is a 491-residue protein sequence, read N- to C-terminus: Protein nucleotidyltransferase YdiU (491 aa).

Residues glycine 88, glycine 90, arginine 91, lysine 111, aspartate 123, glycine 124, arginine 174, and arginine 181 each coordinate ATP. Residue aspartate 250 is the Proton acceptor of the active site. Mg(2+) contacts are provided by asparagine 251 and aspartate 260. An ATP-binding site is contributed by aspartate 260. Over residues 466–484 (DDQPDRADYAEPPQPEERV) the composition is skewed to basic and acidic residues. The segment at 466–491 (DDQPDRADYAEPPQPEERVLQTFCGT) is disordered.

This sequence belongs to the SELO family. Mg(2+) serves as cofactor. Mn(2+) is required as a cofactor.

It carries out the reaction L-seryl-[protein] + ATP = 3-O-(5'-adenylyl)-L-seryl-[protein] + diphosphate. It catalyses the reaction L-threonyl-[protein] + ATP = 3-O-(5'-adenylyl)-L-threonyl-[protein] + diphosphate. The catalysed reaction is L-tyrosyl-[protein] + ATP = O-(5'-adenylyl)-L-tyrosyl-[protein] + diphosphate. The enzyme catalyses L-histidyl-[protein] + UTP = N(tele)-(5'-uridylyl)-L-histidyl-[protein] + diphosphate. It carries out the reaction L-seryl-[protein] + UTP = O-(5'-uridylyl)-L-seryl-[protein] + diphosphate. It catalyses the reaction L-tyrosyl-[protein] + UTP = O-(5'-uridylyl)-L-tyrosyl-[protein] + diphosphate. Its function is as follows. Nucleotidyltransferase involved in the post-translational modification of proteins. It can catalyze the addition of adenosine monophosphate (AMP) or uridine monophosphate (UMP) to a protein, resulting in modifications known as AMPylation and UMPylation. The sequence is that of Protein nucleotidyltransferase YdiU from Bradyrhizobium sp. (strain ORS 278).